The following is a 158-amino-acid chain: Large ribosomal subunit protein bL17 (158 aa).

The interval Ala-119–Glu-158 is disordered. Residues Ala-126 to Glu-158 show a composition bias toward basic and acidic residues.

This sequence belongs to the bacterial ribosomal protein bL17 family. As to quaternary structure, part of the 50S ribosomal subunit. Contacts protein L32.

The sequence is that of Large ribosomal subunit protein bL17 from Anaeromyxobacter sp. (strain K).